The following is a 227-amino-acid chain: Protein rapunzel (227 aa).

A helical membrane pass occupies residues 179–196 (LAYLFCIGFIALMGYYGI).

The protein resides in the membrane. The polypeptide is Protein rapunzel (Danio rerio (Zebrafish)).